The following is a 150-amino-acid chain: UPF0178 protein PSEEN5341 (150 aa).

It belongs to the UPF0178 family.

The protein is UPF0178 protein PSEEN5341 of Pseudomonas entomophila (strain L48).